Here is a 275-residue protein sequence, read N- to C-terminus: Aldo-keto reductase MSMEG_2408/MSMEI_2347 (275 aa).

The Proton donor role is filled by Tyr-49. 8 residues coordinate NADPH: Leu-189, Ile-227, Lys-229, Ser-230, Val-231, Arg-235, Ser-238, and Asn-239. Residue Lys-262 forms an Isoglutamyl lysine isopeptide (Lys-Gln) (interchain with Q-Cter in protein Pup) linkage.

Belongs to the aldo/keto reductase family.

The chain is Aldo-keto reductase MSMEG_2408/MSMEI_2347 from Mycolicibacterium smegmatis (strain ATCC 700084 / mc(2)155) (Mycobacterium smegmatis).